Here is a 433-residue protein sequence, read N- to C-terminus: MPEYVNWLRHASPYINAHRDCTFVVMLPGDGVEHPNFGNIVHDLVLLHSLGVRLVLVHGSRPQIEVRLEARGLTPTYHEGMRITDAATLECVIDAVGHLRIAIEARLSMDMASSPMQGSRLRVTSGNFVTARPIGVLEGVDYHHTGEVRRVDRKGINRLLDERSIVLLSPLGYSPTGEIFNLACEDVATRAAIDLGADKLLLFGADLGLIDENGRLVRELRPQQVPAHLQRLGSSNYQAELLDAAAEACRGGVGRSHIVSYAEDGALLTELFTRDGGGTLVAQEQFELVREAAIEDVGGLLDLISPLEEQGILVRRSREVLEREIEQFSVVEREGMIIACAALYQIADSDAGELACLAVNPEYRHGARGDVLLERIQTRARAQGLKTLFVLTTRTAHWFRERGFVPSSVDRLPSARASLYNYQRNSKIFEKAL.

An N-acetyltransferase domain is found at 287–426; sequence ELVREAAIED…ASLYNYQRNS (140 aa).

It belongs to the acetyltransferase family. ArgA subfamily.

It localises to the cytoplasm. It catalyses the reaction L-glutamate + acetyl-CoA = N-acetyl-L-glutamate + CoA + H(+). The protein operates within amino-acid biosynthesis; L-arginine biosynthesis; N(2)-acetyl-L-ornithine from L-glutamate: step 1/4. In Pseudomonas fluorescens (strain SBW25), this protein is Amino-acid acetyltransferase.